Consider the following 94-residue polypeptide: Large ribosomal subunit protein bL25 (94 aa).

The interval 1–20 is disordered; it reads MFKFNAEVRQSQGKGASRRL.

The protein belongs to the bacterial ribosomal protein bL25 family. Part of the 50S ribosomal subunit; part of the 5S rRNA/L5/L18/L25 subcomplex. Contacts the 5S rRNA. Binds to the 5S rRNA independently of L5 and L18.

This is one of the proteins that binds to the 5S RNA in the ribosome where it forms part of the central protuberance. The chain is Large ribosomal subunit protein bL25 from Pasteurella multocida (strain Pm70).